Reading from the N-terminus, the 414-residue chain is Putative competence-damage inducible protein (414 aa).

It belongs to the CinA family.

This chain is Putative competence-damage inducible protein, found in Listeria monocytogenes serotype 4b (strain CLIP80459).